The chain runs to 212 residues: Prolactin-3C1 (212 aa).

The signal sequence occupies residues Met1–Ala29. A disulfide bond links Cys80 and Cys188. Asn100 carries an N-linked (GlcNAc...) asparagine glycan.

The protein belongs to the somatotropin/prolactin family. In terms of tissue distribution, expressed exclusively in decidua.

Its subcellular location is the secreted. In Mus musculus (Mouse), this protein is Prolactin-3C1 (Prl3c1).